A 347-amino-acid chain; its full sequence is Ubiquitin thioesterase Otu1 (347 aa).

The region spanning 5–87 (FSVKLKSKKG…LIVEEKAAPA (83 aa)) is the Ubiquitin-like domain. The interval 8-89 (KLKSKKGQFI…VEEKAAPAPA (82 aa)) is UBX-like. The 125-residue stretch at 150–274 (LLKKVVPADN…GIHYDPLYME (125 aa)) folds into the OTU domain. The segment at 155–161 (VPADNSC) is cys-loop. D158 is an active-site residue. The active-site Nucleophile is C161. Residues 213–223 (IQKADSWGGAI) are variable-loop. The his-loop stretch occupies residues 263–267 (FDGIH). Residue I266 participates in substrate binding. Residue H267 is part of the active site. The interval 290–295 (LGVYQQ) is S2 site. The C2H2-type zinc finger occupies 317 to 341 (LRCMQCDVRLVGQVQAQEHAKQTGH). H341 is an active-site residue.

It catalyses the reaction Thiol-dependent hydrolysis of ester, thioester, amide, peptide and isopeptide bonds formed by the C-terminal Gly of ubiquitin (a 76-residue protein attached to proteins as an intracellular targeting signal).. Functionally, hydrolase that can remove conjugated ubiquitin from proteins and may therefore play an important regulatory role at the level of protein turnover by preventing degradation. Involved in the regulation of DNA damage repair. This Drosophila melanogaster (Fruit fly) protein is Ubiquitin thioesterase Otu1.